A 186-amino-acid polypeptide reads, in one-letter code: A-type ATP synthase subunit E (186 aa).

This sequence belongs to the V-ATPase E subunit family. Has multiple subunits with at least A(3), B(3), C, D, E, F, H, I and proteolipid K(x).

The protein localises to the cell membrane. Its function is as follows. Component of the A-type ATP synthase that produces ATP from ADP in the presence of a proton gradient across the membrane. This Methanocella arvoryzae (strain DSM 22066 / NBRC 105507 / MRE50) protein is A-type ATP synthase subunit E.